The chain runs to 466 residues: MITLYNTLTRQKEVFKPIEPGKVKMYVCGPTVYNYIHIGNARPAINYDVVRRYFEYQGYNVEYVSNFTDVDDKLIKRSQELNQSVPEIAEKYIAAFHEDVGALNVRKATSNPRVMDHMDDIIQFIKDLVDQGYAYESGGDVYFRTRKFEGYGKLSHQSIDDLKVGARIDAGEHKEDALDFTLWKKAKPGEISWNSPFGEGRPGWHIECSVMAFHELGPTIDIHAGGSDLQFPHHENEIAQSEAHNHAPFANYWMHNGFINIDNEKMSKSLGNFILVHDIIKEVDPDVLRFFMISVHYRSPINYNLELVESARSGLERIRNSYQLIEERAQIATNIENQQTYIDQIDAILNRFETVMNDDFNTANAITAWYDLAKLANKYVLENTTSTEVIDKFKAVYQIFSDVLGVPLKSKNADELLDEDVEKLIEERNEARKNKDFARADEIRDMLKSQNIILEDTPQGVRFKRG.

Cysteine 28 lines the Zn(2+) pocket. Residues 30-40 (PTVYNYIHIGN) carry the 'HIGH' region motif. 3 residues coordinate Zn(2+): cysteine 208, histidine 233, and glutamate 237. A 'KMSKS' region motif is present at residues 265–269 (KMSKS). Residue lysine 268 participates in ATP binding.

The protein belongs to the class-I aminoacyl-tRNA synthetase family. In terms of assembly, monomer. Requires Zn(2+) as cofactor.

The protein localises to the cytoplasm. It carries out the reaction tRNA(Cys) + L-cysteine + ATP = L-cysteinyl-tRNA(Cys) + AMP + diphosphate. This is Cysteine--tRNA ligase from Staphylococcus aureus (strain Mu3 / ATCC 700698).